The primary structure comprises 765 residues: Nucleolar transcription factor 1 (765 aa).

Position 1 is an N-acetylmethionine (M1). The segment at 1–21 is disordered; the sequence is MNGEADCPTDLEMAAPKGQDR. 2 consecutive DNA-binding regions (HMG box) follow at residues 112–180 and 196–264; these read PKKP…ARFR and PEKP…RDYI. T201 is subject to Phosphothreonine. 3 positions are modified to phosphoserine: S273, S336, and S364. A DNA-binding region (HMG box 3) is located at residues 298 to 362; sequence TKPPPNSYSL…DYEVELLRFL (65 aa). A compositionally biased stretch (basic and acidic residues) spans 370-379; the sequence is QQRVLGEEKM. The segment at 370 to 411 is disordered; sequence QQRVLGEEKMLNINKKQTTSPASKKPSQEGGKGGSEKPKRPV. Residues S389, S412, S433, S435, S484, S495, S546, S584, and S638 each carry the phosphoserine modification. DNA-binding regions (HMG box) lie at residues 407–475, 482–549, and 568–634; these read PKRP…GGER, PESP…SEMR, and KKPP…DLWV. Residues 456 to 487 are disordered; that stretch reads YKAREAALKAQSERKPGGEREDRGKLPESPKR. Over residues 457–487 the composition is skewed to basic and acidic residues; sequence KAREAALKAQSERKPGGEREDRGKLPESPKR. The interval 546–576 is disordered; that stretch reads SEMRAPPAATNSSKKMKFQGEPKKPPMNGYQ. Residues 649–765 are disordered; sequence ISNKRKNMTK…SGDSSDSGSN (117 aa). The segment covering 664 to 674 has biased composition (polar residues); that stretch reads PKSSRTTLQSK. Acidic residues predominate over residues 677-746; the sequence is SEEDDDEEEE…DDDEDEDNES (70 aa). A compositionally biased stretch (low complexity) spans 747–765; it reads EGSSSSSSSSGDSSDSGSN.

As to quaternary structure, homodimer. Part of Pol I pre-initiation complex (PIC), in which Pol I core assembles with RRN3 and promoter-bound UTBF and SL1/TIF-IB complex. Interacts with TOP2A in the context of Pol I complex. Interacts with TBP. Interacts with TAF1A. Interacts with RASL11A. Binds to IRS1 and PIK3CA. Interacts with DHX33. Interacts with PHF6. Interacts with CEBPA (isoform 1 and isoform 4). Interacts with DDX11. Interacts with NOP53. Interacts with ALKBH2. In terms of processing, phosphorylated and activated by PIK3CA.

It localises to the nucleus. It is found in the nucleolus. In terms of biological role, recognizes the ribosomal RNA gene promoter and activates transcription mediated by RNA polymerase I through cooperative interactions with the transcription factor SL1/TIF-IB complex. It binds specifically to the upstream control element. In Mus musculus (Mouse), this protein is Nucleolar transcription factor 1 (Ubtf).